A 408-amino-acid polypeptide reads, in one-letter code: Peptidase T (408 aa).

His78 serves as a coordination point for Zn(2+). Asp80 is a catalytic residue. A Zn(2+)-binding site is contributed by Asp140. Residue Glu173 is the Proton acceptor of the active site. Positions 174, 196, and 379 each coordinate Zn(2+).

It belongs to the peptidase M20B family. Zn(2+) serves as cofactor.

The protein resides in the cytoplasm. It carries out the reaction Release of the N-terminal residue from a tripeptide.. Functionally, cleaves the N-terminal amino acid of tripeptides. This is Peptidase T from Escherichia coli (strain UTI89 / UPEC).